The following is a 230-amino-acid chain: NAD(P)H-hydrate epimerase (230 aa).

One can recognise a YjeF N-terminal domain in the interval 11–218 (AIDVDQELFT…ALQRKYGLNL (208 aa)). 61–65 (NNGGD) is a (6S)-NADPHX binding site. 2 residues coordinate K(+): N62 and D126. (6S)-NADPHX is bound by residues 130–136 (GFSFKPP) and D159. Position 162 (S162) interacts with K(+).

The protein belongs to the NnrE/AIBP family. K(+) serves as cofactor.

The catalysed reaction is (6R)-NADHX = (6S)-NADHX. It catalyses the reaction (6R)-NADPHX = (6S)-NADPHX. Its function is as follows. Catalyzes the epimerization of the S- and R-forms of NAD(P)HX, a damaged form of NAD(P)H that is a result of enzymatic or heat-dependent hydration. This is a prerequisite for the S-specific NAD(P)H-hydrate dehydratase to allow the repair of both epimers of NAD(P)HX. This chain is NAD(P)H-hydrate epimerase, found in Drosophila yakuba (Fruit fly).